Consider the following 327-residue polypeptide: tRNA dimethylallyltransferase (327 aa).

14-21 (GPTASGKT) is an ATP binding site. 16–21 (TASGKT) contacts substrate. Interaction with substrate tRNA stretches follow at residues 39-42 (DSAL) and 163-167 (QRIQR).

It belongs to the IPP transferase family. Monomer. The cofactor is Mg(2+).

The catalysed reaction is adenosine(37) in tRNA + dimethylallyl diphosphate = N(6)-dimethylallyladenosine(37) in tRNA + diphosphate. Its function is as follows. Catalyzes the transfer of a dimethylallyl group onto the adenine at position 37 in tRNAs that read codons beginning with uridine, leading to the formation of N6-(dimethylallyl)adenosine (i(6)A). The sequence is that of tRNA dimethylallyltransferase from Xanthomonas campestris pv. campestris (strain 8004).